An 80-amino-acid polypeptide reads, in one-letter code: Acyl carrier protein (80 aa).

The Carrier domain maps to 4–79; that stretch reads DATLEKVRSI…DAVKYIEDKQ (76 aa). At Ser-39 the chain carries O-(pantetheine 4'-phosphoryl)serine.

The protein belongs to the acyl carrier protein (ACP) family. In terms of processing, 4'-phosphopantetheine is transferred from CoA to a specific serine of apo-ACP by AcpS. This modification is essential for activity because fatty acids are bound in thioester linkage to the sulfhydryl of the prosthetic group.

It localises to the cytoplasm. The protein operates within lipid metabolism; fatty acid biosynthesis. Its function is as follows. Carrier of the growing fatty acid chain in fatty acid biosynthesis. The chain is Acyl carrier protein from Prochlorococcus marinus (strain MIT 9211).